A 242-amino-acid chain; its full sequence is 1-(5-phosphoribosyl)-5-[(5-phosphoribosylamino)methylideneamino] imidazole-4-carboxamide isomerase (242 aa).

D8 functions as the Proton acceptor in the catalytic mechanism. D129 functions as the Proton donor in the catalytic mechanism.

This sequence belongs to the HisA/HisF family.

It localises to the cytoplasm. It catalyses the reaction 1-(5-phospho-beta-D-ribosyl)-5-[(5-phospho-beta-D-ribosylamino)methylideneamino]imidazole-4-carboxamide = 5-[(5-phospho-1-deoxy-D-ribulos-1-ylimino)methylamino]-1-(5-phospho-beta-D-ribosyl)imidazole-4-carboxamide. The protein operates within amino-acid biosynthesis; L-histidine biosynthesis; L-histidine from 5-phospho-alpha-D-ribose 1-diphosphate: step 4/9. The chain is 1-(5-phosphoribosyl)-5-[(5-phosphoribosylamino)methylideneamino] imidazole-4-carboxamide isomerase from Clostridium botulinum (strain ATCC 19397 / Type A).